A 121-amino-acid chain; its full sequence is LOB domain-containing protein 23 (121 aa).

The LOB domain maps to 4-105 (KRCAACKYLR…NELAKTQAEI (102 aa)).

This sequence belongs to the LOB domain-containing protein family.

This chain is LOB domain-containing protein 23 (LBD23), found in Arabidopsis thaliana (Mouse-ear cress).